The following is a 156-amino-acid chain: Arginine repressor (156 aa).

The protein belongs to the ArgR family.

It localises to the cytoplasm. The protein operates within amino-acid biosynthesis; L-arginine biosynthesis [regulation]. Its function is as follows. Regulates arginine biosynthesis genes. The polypeptide is Arginine repressor (Shewanella sediminis (strain HAW-EB3)).